Reading from the N-terminus, the 486-residue chain is MHDKTLTELAAGLRAGEFSSRELCQSALDRIQRLDGDLNSFISVTAEQALADADAADQARASGDAAALAGLPLALKDIFCTQGVRTSCGSKMLDSFVAPYDATVVEKIRQAGGVSLGKTNMDEFAMGSSNENSFYGPVKNPWDLSAVPGGSSGGSAAAVAAGLVPAALGTDTGGSIRQPAAFCGITGLKPTYGRVSRYGMVAYASSLDQGGPMARTAADCALLLETIAGHDVRDSTSVARVVPDYSAELDTSLAGLKIGLPKEYFGDGLDPEVETAVREAIKVYESLGAKVCEVSLPHTHLAIPAYYVIAPAEASSNLSRYDGVRFGHRCEDPTDLEDLYKRTRAEGFGEEVKRRILIGTHTLSEGFFDAYYLKAQQVRRLIRQDFLDAFDEVDVLMGPTAPTPAFDLGAQKDPVSMYLQDIYTIAVNLAGIPGISVPAGFAGNRPVGLQVLAPHFAEAQLLGVAHQFQQATDWHLKRPAFGKEMA.

Residues K76 and S151 each act as charge relay system in the active site. Residue S175 is the Acyl-ester intermediate of the active site.

The protein belongs to the amidase family. GatA subfamily. As to quaternary structure, heterotrimer of A, B and C subunits.

It catalyses the reaction L-glutamyl-tRNA(Gln) + L-glutamine + ATP + H2O = L-glutaminyl-tRNA(Gln) + L-glutamate + ADP + phosphate + H(+). Its function is as follows. Allows the formation of correctly charged Gln-tRNA(Gln) through the transamidation of misacylated Glu-tRNA(Gln) in organisms which lack glutaminyl-tRNA synthetase. The reaction takes place in the presence of glutamine and ATP through an activated gamma-phospho-Glu-tRNA(Gln). The chain is Glutamyl-tRNA(Gln) amidotransferase subunit A from Chromohalobacter salexigens (strain ATCC BAA-138 / DSM 3043 / CIP 106854 / NCIMB 13768 / 1H11).